Consider the following 588-residue polypeptide: MFS siderochrome iron transporter 1 (588 aa).

Transmembrane regions (helical) follow at residues Q60 to V80, L104 to A124, P133 to C153, A161 to I181, A191 to L211, Y225 to W245, I278 to Y298, S307 to Y327, L348 to F368, Y385 to V405, W413 to F433, I440 to T460, and Y473 to V495. N519 carries an N-linked (GlcNAc...) asparagine glycan. A helical membrane pass occupies residues K552–W572.

Belongs to the major facilitator superfamily.

It is found in the membrane. Functionally, major facilitator transporter involved in siderophore transport. The polypeptide is MFS siderochrome iron transporter 1 (Ajellomyces capsulatus (Darling's disease fungus)).